The following is a 245-amino-acid chain: NAD-dependent protein deacetylase (245 aa).

Residues 1–245 (MIFVQQFEEV…EFVEGLSSRK (245 aa)) form the Deacetylase sirtuin-type domain. The NAD(+) site is built by A26, T30, F37, R38, Q105, I107, D108, and H123. F37 provides a ligand contact to nicotinamide. Nicotinamide-binding residues include I107 and D108. Residue H123 is the Proton acceptor of the active site. The Zn(2+) site is built by C131, C134, C151, and C154. NAD(+)-binding residues include T190, S191, N216, and I234.

Belongs to the sirtuin family. Class U subfamily. The cofactor is Zn(2+).

It localises to the cytoplasm. It catalyses the reaction N(6)-acetyl-L-lysyl-[protein] + NAD(+) + H2O = 2''-O-acetyl-ADP-D-ribose + nicotinamide + L-lysyl-[protein]. In terms of biological role, NAD-dependent protein deacetylase which modulates the activities of several enzymes which are inactive in their acetylated form. This Bacillus cereus (strain ZK / E33L) protein is NAD-dependent protein deacetylase.